A 246-amino-acid polypeptide reads, in one-letter code: Exosome complex component Rrp41 (246 aa).

Belongs to the RNase PH family. Rrp41 subfamily. As to quaternary structure, component of the archaeal exosome complex. Forms a hexameric ring-like arrangement composed of 3 Rrp41-Rrp42 heterodimers. The hexameric ring associates with a trimer of Rrp4 and/or Csl4 subunits.

Its subcellular location is the cytoplasm. Functionally, catalytic component of the exosome, which is a complex involved in RNA degradation. Has 3'-&gt;5' exoribonuclease activity. Can also synthesize heteromeric RNA-tails. The polypeptide is Exosome complex component Rrp41 (Pyrobaculum neutrophilum (strain DSM 2338 / JCM 9278 / NBRC 100436 / V24Sta) (Thermoproteus neutrophilus)).